Consider the following 966-residue polypeptide: C4 phosphoenolpyruvate carboxylase (966 aa).

Phosphoserine is present on Ser-11. His-172 is a catalytic residue. Positions 283, 450, and 597 each coordinate D-glucose 6-phosphate. Lys-600 is an active-site residue. D-glucose 6-phosphate is bound at residue Arg-635. The active site involves Arg-641. An L-aspartate-binding site is contributed by Arg-641. Thr-665 is a D-glucose 6-phosphate binding site. L-aspartate is bound at residue Gln-673. Residues Arg-753 and Arg-767–Ile-769 each bind D-glucose 6-phosphate. 3 residues coordinate L-aspartate: Lys-829, Arg-888, and Asn-964.

The protein belongs to the PEPCase type 1 family. Homotetramer. Mg(2+) serves as cofactor. As to expression, expressed in mesophyll cells, but not in bundle-sheath, roots, stems and flowers.

Its subcellular location is the cytoplasm. It catalyses the reaction oxaloacetate + phosphate = phosphoenolpyruvate + hydrogencarbonate. The protein operates within photosynthesis; C4 acid pathway. 5 fold activation by the allosteric regulator glucose-6-phosphate. Low sensitivity to inhibition by L-malate and L-aspartate. Up-regulated by light-reversible phosphorylation. Functionally, forms oxaloacetate through the carboxylation of phosphoenolpyruvate (PEP). Catalyzes the first step of C4 photosynthesis. This is C4 phosphoenolpyruvate carboxylase from Flaveria trinervia (Clustered yellowtops).